The following is a 463-amino-acid chain: MSYMIAVPDMLSSAAGDLASIGSSINASTRAAAAATTRLLPAAADEVSAHIAALFSGHGEGYQAIARQMAAFHDQFTLALTSSAGAYASAEATNVEQQVLGLINAPTQALLGRPLIGNGADGTAANPNGGAGGLLYGNGGNGFSQTTAGLTGGTGGSAGLIGNGGNGGAGGAGANGGAGGNGGWLYGSGGNGGAGGAGPAGAIGAPGVAGGAGGAGGTAGLFGNGGAGGAGGAGGAGGRGGDGGSAGWLSGNGGDAGTGGGGGNAGNGGNGGSAGWLSGNGGTGGGGGTAGAGGQGGNGNSGIDPGNGGQGADTGNAGNGGHGGSAAKLFGDGGAGGAGGMGSTGGTGGGGGFGGGTGGNGGNGHAGGAGGSGGTAGLLGSGGSGGTGGDGGNGGLGAGSGAKGNGGNGGDGGKGGDAQLIGNGGNGGNGGKGGTGLMPGINGTGGAGGSRGQISGNPGTPGQ.

One can recognise a PE domain in the interval Met-1–Thr-93. Disordered stretches follow at residues Gly-231 to Gly-320 and Asn-408 to Gln-463. Gly residues predominate over residues Asn-408 to Arg-451.

The protein belongs to the mycobacterial PE family. PGRS subfamily.

This is an uncharacterized protein from Mycobacterium tuberculosis (strain ATCC 25618 / H37Rv).